Reading from the N-terminus, the 402-residue chain is Putative FBD-associated F-box protein At5g56690 (402 aa).

The F-box domain maps to 1–47 (MAEISGLPDDLLVKILAFLPTKVAISTSVLSKQWRFLWMWLPKLKYD). An FBD domain is found at 349–401 (SWSKNQGSVPKCFLNSLETFRVKWYYSEEQEDRDFLSLIFKHARCLKSTSILH).

The protein is Putative FBD-associated F-box protein At5g56690 of Arabidopsis thaliana (Mouse-ear cress).